Reading from the N-terminus, the 498-residue chain is Glycerol kinase (498 aa).

ADP is bound at residue Thr-11. 3 residues coordinate ATP: Thr-11, Ser-12, and Ser-13. Thr-11 contacts sn-glycerol 3-phosphate. Arg-15 contacts ADP. Positions 81, 82, 133, and 242 each coordinate sn-glycerol 3-phosphate. 5 residues coordinate glycerol: Arg-81, Glu-82, Tyr-133, Asp-242, and Gln-243. Thr-264 and Gly-307 together coordinate ADP. Positions 264, 307, 311, and 412 each coordinate ATP. ADP-binding residues include Gly-412 and Asn-416.

The protein belongs to the FGGY kinase family.

The enzyme catalyses glycerol + ATP = sn-glycerol 3-phosphate + ADP + H(+). The protein operates within polyol metabolism; glycerol degradation via glycerol kinase pathway; sn-glycerol 3-phosphate from glycerol: step 1/1. Inhibited by fructose 1,6-bisphosphate (FBP). Its function is as follows. Key enzyme in the regulation of glycerol uptake and metabolism. Catalyzes the phosphorylation of glycerol to yield sn-glycerol 3-phosphate. The protein is Glycerol kinase of Acidovorax ebreus (strain TPSY) (Diaphorobacter sp. (strain TPSY)).